A 452-amino-acid polypeptide reads, in one-letter code: Flavanone 7-O-glucoside 2''-O-beta-L-rhamnosyltransferase (452 aa).

The Proton acceptor role is filled by His-21. His-21 is an an anthocyanidin binding site. Asp-121 functions as the Charge relay in the catalytic mechanism. Residues 136–156 (IAAILFLPLSAVACSFLLHNI) traverse the membrane as a helical segment. Residues Ser-268, Val-330, His-347, Gly-351, Ser-352, and Glu-355 each contribute to the UDP-beta-L-rhamnose site. A coiled-coil region spans residues 407–436 (KHVVLQEEAKQIRRKANEISESMKKIGDAE).

Belongs to the UDP-glycosyltransferase family. In terms of assembly, monomer. As to expression, expressed in young fruits and leaves.

The protein localises to the membrane. It catalyses the reaction flavanone 7-O-beta-D-glucoside + UDP-beta-L-rhamnose = flavanone 7-O-[alpha-L-rhamnosyl-(1-&gt;2)-beta-D-glucoside] + UDP + H(+). Functionally, involved in the production of the bitter neohesperidosides in citrus. Shows a strict specificity for UDP-rhamnose as donor. The protein is Flavanone 7-O-glucoside 2''-O-beta-L-rhamnosyltransferase (C12RT1) of Citrus maxima (Pomelo).